A 325-amino-acid polypeptide reads, in one-letter code: DNA repair and recombination protein RadA (325 aa).

G107–T114 provides a ligand contact to ATP.

This sequence belongs to the eukaryotic RecA-like protein family.

In terms of biological role, involved in DNA repair and in homologous recombination. Binds and assemble on single-stranded DNA to form a nucleoprotein filament. Hydrolyzes ATP in a ssDNA-dependent manner and promotes DNA strand exchange between homologous DNA molecules. This chain is DNA repair and recombination protein RadA, found in Methanosarcina barkeri (strain Fusaro / DSM 804).